Here is a 238-residue protein sequence, read N- to C-terminus: Probable transcriptional regulatory protein SUB0364 (238 aa).

This sequence belongs to the TACO1 family. YeeN subfamily.

The protein localises to the cytoplasm. In Streptococcus uberis (strain ATCC BAA-854 / 0140J), this protein is Probable transcriptional regulatory protein SUB0364.